Here is a 593-residue protein sequence, read N- to C-terminus: NADH-quinone oxidoreductase subunit C/D (593 aa).

An NADH dehydrogenase I subunit C region spans residues 1–184 (MTADNAIFIP…DPYSLTLAKQ (184 aa)). Residues 208–593 (DYMFLNLGPN…IDFVMADVDR (386 aa)) form an NADH dehydrogenase I subunit D region.

It in the N-terminal section; belongs to the complex I 30 kDa subunit family. The protein in the C-terminal section; belongs to the complex I 49 kDa subunit family. In terms of assembly, NDH-1 is composed of 13 different subunits. Subunits NuoB, CD, E, F, and G constitute the peripheral sector of the complex.

The protein localises to the cell inner membrane. It catalyses the reaction a quinone + NADH + 5 H(+)(in) = a quinol + NAD(+) + 4 H(+)(out). Functionally, NDH-1 shuttles electrons from NADH, via FMN and iron-sulfur (Fe-S) centers, to quinones in the respiratory chain. The immediate electron acceptor for the enzyme in this species is believed to be ubiquinone. Couples the redox reaction to proton translocation (for every two electrons transferred, four hydrogen ions are translocated across the cytoplasmic membrane), and thus conserves the redox energy in a proton gradient. The chain is NADH-quinone oxidoreductase subunit C/D from Pseudomonas putida (strain ATCC 700007 / DSM 6899 / JCM 31910 / BCRC 17059 / LMG 24140 / F1).